A 247-amino-acid chain; its full sequence is Sugar fermentation stimulation protein homolog (247 aa).

This sequence belongs to the SfsA family.

The protein is Sugar fermentation stimulation protein homolog of Methylorubrum populi (strain ATCC BAA-705 / NCIMB 13946 / BJ001) (Methylobacterium populi).